A 284-amino-acid chain; its full sequence is AA14 family lytic polysaccharide monooxygenase B (284 aa).

The N-terminal stretch at 1–20 (MGYLSKLVTSVVFAIPLASA) is a signal peptide. N-linked (GlcNAc...) asparagine glycosylation is found at Asn42, Asn96, Asn142, and Asn183. Cys197 and Cys218 form a disulfide bridge.

This sequence belongs to the polysaccharide monooxygenase AA14 family. Requires Cu(2+) as cofactor.

It is found in the secreted. Lytic polysaccharide monooxygenase (LPMO) that plays decomposes some specific network structures formed between cellulose and hemicellulose in the plant cell walls. Catalysis by LPMOs requires the reduction of the active-site copper from Cu(II) to Cu(I) by a reducing agent and H(2)O(2) or O(2) as a cosubstrate. This is AA14 family lytic polysaccharide monooxygenase B from Talaromyces rugulosus (Penicillium rugulosum).